The primary structure comprises 377 residues: Apelin receptor (377 aa).

Topologically, residues 1–28 (MEDDGYNYYGADNQSECDYADWTPSGAL) are extracellular. An N-linked (GlcNAc...) asparagine glycan is attached at Asn-13. Cystine bridges form between Cys-17/Cys-279 and Cys-100/Cys-179. The helical transmembrane segment at 29 to 52 (IPAIYILVFLLGTTGNGLVLWTVF) threads the bilayer. The Cytoplasmic segment spans residues 53-62 (WSSREKRRSA). The chain crosses the membrane as a helical span at residues 63 to 84 (DIFIASLAVADLTFVVTLPLWA). Residues 85-97 (TYTYREFDWPFGT) lie on the Extracellular side of the membrane. Residues 98 to 123 (FSCKLSSYLIFVNMYASVFCLTGLSF) form a helical membrane-spanning segment. At 124 to 144 (DRYLAIVRPVANARLRLRVSG) the chain is on the cytoplasmic side. A helical membrane pass occupies residues 145-162 (AVATAVLWVLAALLAVPV). At 163–196 (MVFRSTDIPENSTKTQCYMDYSMVATSNSEWAWE) the chain is on the extracellular side. The N-linked (GlcNAc...) asparagine glycan is linked to Asn-173. A helical membrane pass occupies residues 197–221 (VGLGVSSTAVGFVVPFIIMLTCYFF). Residues 222-244 (IAQTIAGHFRKERIEGLRKRRRL) are Cytoplasmic-facing. The chain crosses the membrane as a helical span at residues 245 to 268 (LSIIVVLVVTFALCWMPYHLVKTL). The Extracellular portion of the chain corresponds to 269 to 287 (YMLGNLLHWPCDFDSFLMN). A helical transmembrane segment spans residues 288 to 310 (VFPYCTCISYVNSCLNPFLYAFF). At 311-377 (DPRFRRACTS…IPYSQETLVD (67 aa)) the chain is on the cytoplasmic side. Over residues 335–349 (SSSAEKSASYSSGHS) the composition is skewed to low complexity. Residues 335-377 (SSSAEKSASYSSGHSQGPGPNMCKGGEPMHEKSIPYSQETLVD) form a disordered region.

This sequence belongs to the G-protein coupled receptor 1 family. Homodimer; dimerization inhibits APLNR-mediated G protein and beta-arrestin signaling pathways compared to monomeric APLNR. In terms of tissue distribution, widely expressed. Highest expression in the lung, lower in the heart, placenta, ovary, skeletal muscle, mammary gland, kidney and several structures in the brain as the hypothalamus (supraoptic and periventricular nuclei), pituitary, olfactory bulb and pineal gland.

It localises to the cell membrane. Functionally, g protein-coupled receptor for peptide hormones apelin (APLN) and apelin receptor early endogenous ligand (APELA/ELA), that plays a role in the regulation of normal cardiovascular function and fluid homeostasis. When acting as apelin receptor, activates both G(i) protein pathway that inhibits adenylate cyclase activity, and the beta-arrestin pathway that promotes internalization of the receptor. APLNR/APJ also functions as mechanoreceptor that is activated by pathological stimuli in a G-protein-independent fashion to induce beta-arrestin signaling, hence eliciting cardiac hypertrophy. However, the presence of apelin ligand blunts cardiac hypertrophic induction from APLNR/APJ on response to pathological stimuli. Plays a key role in early development such as gastrulation, blood vessels formation and heart morphogenesis by acting as a APELA receptor. May promote angioblast migration toward the embryonic midline, i.e. the position of the future vessel formation, during vasculogenesis. Promotes sinus venosus (SV)-derived endothelial cells migration into the developing heart to promote coronary blood vessel development. Also plays a role in various processes in adults such as regulation of blood vessel formation, blood pressure, heart contractility and heart failure. The sequence is that of Apelin receptor from Rattus norvegicus (Rat).